Here is a 635-residue protein sequence, read N- to C-terminus: Glutamine--fructose-6-phosphate aminotransferase [isomerizing] (635 aa).

The Nucleophile; for GATase activity role is filled by C2. The region spanning 2–218 is the Glutamine amidotransferase type-2 domain; the sequence is CGIVGMVAGR…EGDIADVHRD (217 aa). 2 consecutive SIS domains span residues 299–439 and 472–625; these read FERL…AKKI and CARH…IDQP. K630 serves as the catalytic For Fru-6P isomerization activity.

In terms of assembly, homodimer.

Its subcellular location is the cytoplasm. The catalysed reaction is D-fructose 6-phosphate + L-glutamine = D-glucosamine 6-phosphate + L-glutamate. In terms of biological role, catalyzes the first step in hexosamine metabolism, converting fructose-6P into glucosamine-6P using glutamine as a nitrogen source. This Treponema pallidum (strain Nichols) protein is Glutamine--fructose-6-phosphate aminotransferase [isomerizing].